The following is a 156-amino-acid chain: Nuclear cap-binding protein subunit 2 (156 aa).

An N-acetylserine modification is found at S2. A phosphoserine mark is found at S13 and S18. MRNA is bound by residues Y20, Y43, 112–116 (RTDWD), 123–127 (RQYGR), and 133–134 (QV). In terms of domain architecture, RRM spans 40 to 118 (CTLYVGNLSF…RIIRTDWDAG (79 aa)). The interval 124–156 (QYGRGRSGGQVRDEYREDYDAGRGGYGKLAQKQ) is disordered. The segment covering 134–144 (VRDEYREDYDA) has biased composition (basic and acidic residues). Residue R146 is modified to Omega-N-methylarginine.

The protein belongs to the RRM NCBP2 family. Component of the nuclear cap-binding complex (CBC), a heterodimer composed of NCBP1/CBP80 and NCBP2/CBP20 that interacts with m7GpppG-capped RNA. Found in a U snRNA export complex with PHAX/RNUXA, NCBP1/CBP80, NCBP2/CBP20, RAN, XPO1 and m7G-capped RNA. Interacts with PHAX/RNUXA, EIF4G1, HNRNPF, HNRNPH1 and ALYREF/THOC4/ALY. Interacts with SRRT/ARS2 and KPNA3.

The protein resides in the nucleus. The protein localises to the cytoplasm. Its function is as follows. Component of the cap-binding complex (CBC), which binds co-transcriptionally to the 5' cap of pre-mRNAs and is involved in various processes such as pre-mRNA splicing, translation regulation, nonsense-mediated mRNA decay, RNA-mediated gene silencing (RNAi) by microRNAs (miRNAs) and mRNA export. The CBC complex is involved in mRNA export from the nucleus via its interaction with ALYREF/THOC4/ALY, leading to the recruitment of the mRNA export machinery to the 5' end of mRNA and to mRNA export in a 5' to 3' direction through the nuclear pore. The CBC complex is also involved in mediating U snRNA and intronless mRNAs export from the nucleus. The CBC complex is essential for a pioneer round of mRNA translation, before steady state translation when the CBC complex is replaced by cytoplasmic cap-binding protein eIF4E. The pioneer round of mRNA translation mediated by the CBC complex plays a central role in nonsense-mediated mRNA decay (NMD), NMD only taking place in mRNAs bound to the CBC complex, but not on eIF4E-bound mRNAs. The CBC complex enhances NMD in mRNAs containing at least one exon-junction complex (EJC) via its interaction with UPF1, promoting the interaction between UPF1 and UPF2. The CBC complex is also involved in 'failsafe' NMD, which is independent of the EJC complex, while it does not participate in Staufen-mediated mRNA decay (SMD). During cell proliferation, the CBC complex is also involved in microRNAs (miRNAs) biogenesis via its interaction with SRRT/ARS2, thereby being required for miRNA-mediated RNA interference. The CBC complex also acts as a negative regulator of PARN, thereby acting as an inhibitor of mRNA deadenylation. In the CBC complex, NCBP2/CBP20 recognizes and binds capped RNAs (m7GpppG-capped RNA) but requires NCBP1/CBP80 to stabilize the movement of its N-terminal loop and lock the CBC into a high affinity cap-binding state with the cap structure. The conventional cap-binding complex with NCBP2 binds both small nuclear RNA (snRNA) and messenger (mRNA) and is involved in their export from the nucleus. The protein is Nuclear cap-binding protein subunit 2 (Ncbp2) of Mus musculus (Mouse).